Here is a 321-residue protein sequence, read N- to C-terminus: Phosphoenolpyruvate transferase (321 aa).

D51 provides a ligand contact to 7,8-didemethyl-8-hydroxy-5-deazariboflavin.

The protein belongs to the CofD family. As to quaternary structure, homodimer. Mg(2+) is required as a cofactor.

It catalyses the reaction enolpyruvoyl-2-diphospho-5'-guanosine + 7,8-didemethyl-8-hydroxy-5-deazariboflavin = dehydro coenzyme F420-0 + GMP + H(+). It participates in cofactor biosynthesis; coenzyme F420 biosynthesis. Its function is as follows. Catalyzes the transfer of the phosphoenolpyruvate moiety from enoylpyruvoyl-2-diphospho-5'-guanosine (EPPG) to 7,8-didemethyl-8-hydroxy-5-deazariboflavin (FO) with the formation of dehydro coenzyme F420-0 and GMP. The chain is Phosphoenolpyruvate transferase from Kitasatospora aureofaciens (Streptomyces aureofaciens).